The sequence spans 378 residues: Enoyl-[acyl-carrier-protein] reductase 1, mitochondrial (378 aa).

Y59 functions as the Proton donor in the catalytic mechanism. NADP(+) contacts are provided by residues N151, 180–183 (NSQV), 203–206 (RDGK), 284–287 (YGGM), 309–311 (YWL), and K372.

Belongs to the zinc-containing alcohol dehydrogenase family. Quinone oxidoreductase subfamily. Homodimer.

It localises to the mitochondrion matrix. It catalyses the reaction a 2,3-saturated acyl-[ACP] + NADP(+) = a (2E)-enoyl-[ACP] + NADPH + H(+). Catalyzes the NADPH-dependent reduction of trans-2-enoyl thioesters in mitochondrial fatty acid synthesis (fatty acid synthesis type II). Fatty acid chain elongation in mitochondria uses acyl carrier protein (ACP) as an acyl group carrier, but the enzyme accepts both ACP and CoA thioesters as substrates in vitro. Required for respiration and the maintenance of the mitochondrial compartment. This is Enoyl-[acyl-carrier-protein] reductase 1, mitochondrial (ETR1) from Debaryomyces hansenii (strain ATCC 36239 / CBS 767 / BCRC 21394 / JCM 1990 / NBRC 0083 / IGC 2968) (Yeast).